The chain runs to 243 residues: 1-(5-phosphoribosyl)-5-[(5-phosphoribosylamino)methylideneamino] imidazole-4-carboxamide isomerase (243 aa).

Residue Asp8 is the Proton acceptor of the active site. The active-site Proton donor is the Asp129.

The protein belongs to the HisA/HisF family.

It localises to the cytoplasm. It carries out the reaction 1-(5-phospho-beta-D-ribosyl)-5-[(5-phospho-beta-D-ribosylamino)methylideneamino]imidazole-4-carboxamide = 5-[(5-phospho-1-deoxy-D-ribulos-1-ylimino)methylamino]-1-(5-phospho-beta-D-ribosyl)imidazole-4-carboxamide. Its pathway is amino-acid biosynthesis; L-histidine biosynthesis; L-histidine from 5-phospho-alpha-D-ribose 1-diphosphate: step 4/9. The sequence is that of 1-(5-phosphoribosyl)-5-[(5-phosphoribosylamino)methylideneamino] imidazole-4-carboxamide isomerase from Moorella thermoacetica (strain ATCC 39073 / JCM 9320).